We begin with the raw amino-acid sequence, 248 residues long: Ribosomal RNA small subunit methyltransferase J (248 aa).

Residues 101 to 102, 117 to 118, 153 to 154, and aspartate 171 each bind S-adenosyl-L-methionine; these read RD, ER, and SS.

The protein belongs to the methyltransferase superfamily. RsmJ family.

It is found in the cytoplasm. It catalyses the reaction guanosine(1516) in 16S rRNA + S-adenosyl-L-methionine = N(2)-methylguanosine(1516) in 16S rRNA + S-adenosyl-L-homocysteine + H(+). Its function is as follows. Specifically methylates the guanosine in position 1516 of 16S rRNA. The polypeptide is Ribosomal RNA small subunit methyltransferase J (Serratia proteamaculans (strain 568)).